We begin with the raw amino-acid sequence, 301 residues long: Oxygen-dependent coproporphyrinogen-III oxidase (301 aa).

A substrate-binding site is contributed by Ser-90. Residues His-94 and His-104 each coordinate a divalent metal cation. His-104 acts as the Proton donor in catalysis. Residue 106–108 (NVR) coordinates substrate. The a divalent metal cation site is built by His-143 and His-173. The important for dimerization stretch occupies residues 238–273 (YVEFNLVWDRGTLFGLQSGGRTESILMSLPPIVKWR). 256–258 (GGR) is a substrate binding site.

This sequence belongs to the aerobic coproporphyrinogen-III oxidase family. As to quaternary structure, homodimer. The cofactor is a divalent metal cation.

It is found in the cytoplasm. The catalysed reaction is coproporphyrinogen III + O2 + 2 H(+) = protoporphyrinogen IX + 2 CO2 + 2 H2O. It participates in porphyrin-containing compound metabolism; protoporphyrin-IX biosynthesis; protoporphyrinogen-IX from coproporphyrinogen-III (O2 route): step 1/1. Involved in the heme biosynthesis. Catalyzes the aerobic oxidative decarboxylation of propionate groups of rings A and B of coproporphyrinogen-III to yield the vinyl groups in protoporphyrinogen-IX. The sequence is that of Oxygen-dependent coproporphyrinogen-III oxidase from Nitrosomonas eutropha (strain DSM 101675 / C91 / Nm57).